The sequence spans 213 residues: Charged multivesicular body protein 2b (213 aa).

Position 2 is an N-acetylalanine (Ala2). A coiled-coil region spans residues 25-55; sequence QRAIIRDRAALEKQEKQLELEIKKMAKIGNK. Residues 179–194 are compositionally biased toward low complexity; that stretch reads AKAPSAARSLPSASTS. A disordered region spans residues 179–199; the sequence is AKAPSAARSLPSASTSKATIS. Ser199 carries the phosphoserine modification. Positions 201-211 match the MIT-interacting motif motif; it reads EEIERQLKALG.

This sequence belongs to the SNF7 family. As to quaternary structure, probable core component of the endosomal sorting required for transport complex III (ESCRT-III). ESCRT-III components are thought to multimerize to form a flat lattice on the perimeter membrane of the endosome. Several assembly forms of ESCRT-III may exist that interact and act sequentially. Interacts with CHMP2A. Interacts with VPS4A. Interacts with VPS4B; the interaction is direct. As to expression, widely expressed. Expressed in brain, heart, skeletal muscle, spleen, kidney, liver, small intestine, pancreas, lung, placenta and leukocytes. In brain, it is expressed in cerebellum, cerebral cortex, medulla, spinal cord, occipital lobe, frontal lobe, temporal lobe and putamen.

Its subcellular location is the cytoplasm. The protein resides in the cytosol. The protein localises to the late endosome membrane. Functionally, probable core component of the endosomal sorting required for transport complex III (ESCRT-III) which is involved in multivesicular bodies (MVBs) formation and sorting of endosomal cargo proteins into MVBs. MVBs contain intraluminal vesicles (ILVs) that are generated by invagination and scission from the limiting membrane of the endosome and mostly are delivered to lysosomes enabling degradation of membrane proteins, such as stimulated growth factor receptors, lysosomal enzymes and lipids. The MVB pathway appears to require the sequential function of ESCRT-O, -I,-II and -III complexes. ESCRT-III proteins mostly dissociate from the invaginating membrane before the ILV is released. The ESCRT machinery also functions in topologically equivalent membrane fission events, such as the terminal stages of cytokinesis and the budding of enveloped viruses (HIV-1 and other lentiviruses). ESCRT-III proteins are believed to mediate the necessary vesicle extrusion and/or membrane fission activities, possibly in conjunction with the AAA ATPase VPS4. The chain is Charged multivesicular body protein 2b (CHMP2B) from Homo sapiens (Human).